The following is a 466-amino-acid chain: MAKTLYEKLFDAHVVYEAENETPLLYIDRHLVHEVTSPQAFDGLRAHGRPVRQPGKTFATMDHNVSTQTKDINACGEMARIQMQELIKNCKEFGVELYDLNHPYQGIVHVMGPEQGVTLPGMTIVCGDSHTATHGAFGALAFGIGTSEVEHVLATQTLKQGRAKTMKIEVQGKAAPGITAKDIVLAIIGKTGSAGGTGHVVEFCGEAIRDLSMEGRMTLCNMAIEMGAKAGLVAPDETTFNYVKGRLHAPKGKDFDDAVAYWKTLQTDEGATFDTVVTLQAEEISPQVTWGTNPGQVISVNDNIPDPASFADPVERASAEKALAYMGLKPGIPLTEVAIDKVFIGSCTNSRIEDLRAAAEIAKGRKVAPGVQALVVPGSGPVKAQAEAEGLDKIFIEAGFEWRLPGCSMCLAMNNDRLNPGERCASTSNRNFEGRQGRGGRTHLVSPAMAAAAAVTGHFADIRNIK.

Cysteine 347, cysteine 407, and cysteine 410 together coordinate [4Fe-4S] cluster.

It belongs to the aconitase/IPM isomerase family. LeuC type 1 subfamily. In terms of assembly, heterodimer of LeuC and LeuD. Requires [4Fe-4S] cluster as cofactor.

The catalysed reaction is (2R,3S)-3-isopropylmalate = (2S)-2-isopropylmalate. It participates in amino-acid biosynthesis; L-leucine biosynthesis; L-leucine from 3-methyl-2-oxobutanoate: step 2/4. Functionally, catalyzes the isomerization between 2-isopropylmalate and 3-isopropylmalate, via the formation of 2-isopropylmaleate. The protein is 3-isopropylmalate dehydratase large subunit of Escherichia coli O45:K1 (strain S88 / ExPEC).